A 565-amino-acid chain; its full sequence is Periplasmic trehalase (565 aa).

The signal sequence occupies residues 1–30 (MKSPAPSRPQKMALIPACIFLCFAALSVQA). Substrate contacts are provided by residues Arg152, 159–160 (WD), Asn196, 205–207 (RSQ), 277–279 (RPE), and Gly310. Active-site proton donor/acceptor residues include Asp312 and Glu496. Glu511 contributes to the substrate binding site. The tract at residues 538 to 565 (PCDNVPATRPTVKSATTQPSTKEAQPTP) is disordered. Positions 548–565 (TVKSATTQPSTKEAQPTP) are enriched in polar residues.

Belongs to the glycosyl hydrolase 37 family. In terms of assembly, monomer.

The protein localises to the periplasm. It carries out the reaction alpha,alpha-trehalose + H2O = alpha-D-glucose + beta-D-glucose. Its function is as follows. Provides the cells with the ability to utilize trehalose at high osmolarity by splitting it into glucose molecules that can subsequently be taken up by the phosphotransferase-mediated uptake system. This is Periplasmic trehalase from Escherichia coli (strain K12 / MC4100 / BW2952).